We begin with the raw amino-acid sequence, 266 residues long: Tryptophan synthase alpha chain (266 aa).

Catalysis depends on proton acceptor residues Glu49 and Asp60.

It belongs to the TrpA family. Tetramer of two alpha and two beta chains.

The enzyme catalyses (1S,2R)-1-C-(indol-3-yl)glycerol 3-phosphate + L-serine = D-glyceraldehyde 3-phosphate + L-tryptophan + H2O. It functions in the pathway amino-acid biosynthesis; L-tryptophan biosynthesis; L-tryptophan from chorismate: step 5/5. In terms of biological role, the alpha subunit is responsible for the aldol cleavage of indoleglycerol phosphate to indole and glyceraldehyde 3-phosphate. In Chloroflexus aurantiacus (strain ATCC 29364 / DSM 637 / Y-400-fl), this protein is Tryptophan synthase alpha chain.